Consider the following 482-residue polypeptide: Pancreatic lipase-related protein 2 (482 aa).

The N-terminal stretch at 1–30 (MPMDVRGCLFPSVQMLLCWLVSLLLATVGG) is a signal peptide. An intrachain disulfide couples Cys34 to Cys40. N-linked (GlcNAc...) asparagine glycosylation is present at Asn92. The segment at 106–118 (IHGFIDKGEEGWL) is required for galactolipase activity. Cys122 and Cys133 are oxidised to a cystine. The active-site Nucleophile is Ser184. Asp208 serves as the catalytic Charge relay system. Positions 219, 222, 224, and 227 each coordinate Ca(2+). Cys269 and Cys293 are disulfide-bonded. The tract at residues 270–292 (QKNILSTIVDINGIWEGTRNFAA) is required for galactolipase activity. His295 functions as the Charge relay system in the catalytic mechanism. 2 disulfides stabilise this stretch: Cys317-Cys328 and Cys331-Cys336. N-linked (GlcNAc...) asparagine glycosylation is found at Asn366 and Asn441. Positions 370-482 (WRYKVSVTLS…EDVLQSLYPC (113 aa)) constitute a PLAT domain. A disulfide bond links Cys466 and Cys482.

It belongs to the AB hydrolase superfamily. Lipase family. Expressed in acinar cells of pancreas (at protein level).

Its subcellular location is the secreted. The protein localises to the zymogen granule membrane. It is found in the cell projection. The protein resides in the neuron projection. It catalyses the reaction a triacylglycerol + H2O = a diacylglycerol + a fatty acid + H(+). The catalysed reaction is a 1,2-diacyl-3-O-(beta-D-galactosyl)-sn-glycerol + 2 H2O = 3-beta-D-galactosyl-sn-glycerol + 2 a fatty acid + 2 H(+). The enzyme catalyses 1,2,3-tri-(9Z-octadecenoyl)-glycerol + H2O = di-(9Z)-octadecenoylglycerol + (9Z)-octadecenoate + H(+). It carries out the reaction di-(9Z)-octadecenoylglycerol + H2O = (9Z-octadecenoyl)-glycerol + (9Z)-octadecenoate + H(+). It catalyses the reaction (9Z-octadecenoyl)-glycerol + H2O = glycerol + (9Z)-octadecenoate + H(+). The catalysed reaction is 1-(9Z-octadecenoyl)-glycerol + H2O = glycerol + (9Z)-octadecenoate + H(+). The enzyme catalyses 1,2,3-tripropanoylglycerol + H2O = dipropanoylglycerol + propanoate + H(+). It carries out the reaction 1,2,3-tributanoylglycerol + H2O = dibutanoylglycerol + butanoate + H(+). It catalyses the reaction 1,2,3-trioctanoylglycerol + H2O = dioctanoylglycerol + octanoate + H(+). The catalysed reaction is 1,2-didecanoylglycerol + H2O = decanoylglycerol + decanoate + H(+). The enzyme catalyses long chain 1,2-diacyl-3-O-beta-D-galactosyl-sn-glycerol + H2O = long chain acyl-3-O-beta-D-galactosyl-sn-glycerol + a fatty acid + H(+). It carries out the reaction 1,2-dioctanoyl-3-O-beta-D-galactosyl-sn-glycerol + H2O = octanoyl-3-(beta-D-galactosyl)-sn-glycerol + octanoate + H(+). It catalyses the reaction 1,2-didodecanoyl-3-beta-D-galactosyl-sn-glycerol + H2O = dodecanoyl-3-beta-D-galactosyl-sn-glycerol + dodecanoate + H(+). The catalysed reaction is 1-beta-D-galactosyl-2,3-didodecanoyl-sn-glycerol + H2O = 1-beta-D-galactosyl-dodecanoyl-sn-glycerol + dodecanoate + H(+). The enzyme catalyses a 1,2-diacyl-3-O-[alpha-D-galactosyl-(1-&gt;6)-beta-D-galactosyl]-sn-glycerol + H2O = acyl-3-O-[alpha-D-galactosyl-(1-&gt;6)-beta-D-galactosyl]-sn-glycerol + a fatty acid + H(+). It carries out the reaction long chain 1,2-diacyl-3-O-[alpha-D-galactosyl-(1-&gt;6)-beta-D-galactosyl]-sn-glycerol + H2O = long chain acyl-3-O-[alpha-D-galactosyl-(1-&gt;6)-beta-D-galactosyl]-sn-glycerol + a fatty acid + H(+). It catalyses the reaction 1,2-dioctanoyl-3-O-[alpha-D-galactosyl-(1-&gt;6)-beta-D-galactosyl]-sn-glycerol + H2O = octanoyl-3-O-[alpha-D-galactosyl-(1-&gt;6)-beta-D-galactosyl]-sn-glycerol + octanoate + H(+). The catalysed reaction is 1,2-didodecanoyl-3-O-[alpha-D-galactosyl-(1-&gt;6)-beta-D-galactosyl]-sn-glycerol + H2O = dodecanoyl-3-O-[alpha-D-galactosyl-(1-&gt;6)-beta-D-galactosyl]-sn-glycerol + dodecanoate + H(+). The enzyme catalyses a 1,2-diacyl-sn-glycero-3-phosphocholine + H2O = a monoacyl-sn-glycero-3-phosphocholine + a fatty acid + H(+). The protein operates within glycerolipid metabolism; triacylglycerol degradation. It participates in glycolipid metabolism. CLPS stimulates triacylglycerol lipase activity. Triacylglycerol lipase activity is not inhibited by increasing bile salt concentration. Functionally, lipase that primarily hydrolyzes triglycerides and galactosylglycerides. In neonates, may play a major role in pancreatic digestion of dietary fats such as milk fat globules enriched in long-chain triglycerides. Hydrolyzes short-, medium- and long-chain fatty acyls in triglycerides without apparent positional specificity. Can completely deacylate triacylglycerols. When the liver matures and bile salt synthesis increases, likely functions mainly as a galactolipase and monoacylglycerol lipase. Hydrolyzes monogalactosyldiglycerols (MGDG) and digalactosyldiacylglycerols (DGDG) present in a plant-based diet, releasing long-chain polyunsaturated fatty acids. Hydrolyzes medium- and long-chain fatty acyls in galactolipids. May act together with LIPF to hydrolyze partially digested triglycerides. Hydrolyzes long-chain monoglycerides with high efficiency. In cytotoxic T cells, contributes to perforin-dependent cell lysis, but is unlikely to mediate direct cytotoxicity. Also has low phospholipase activity. In neurons, required for the localization of the phospholipid 1-oleoyl-2-palmitoyl-PC (OPPC) to neurite tips through acyl chain remodeling of membrane phospholipids. The resulting OPPC-rich lipid membrane domain recruits the t-SNARE protein STX4 by selectively interacting with the STX4 transmembrane domain and this promotes surface expression of the dopamine transporter SLC6A3/DAT at neurite tips by facilitating fusion of SLC6A3-containing transport vesicles with the plasma membrane. In Mus musculus (Mouse), this protein is Pancreatic lipase-related protein 2.